We begin with the raw amino-acid sequence, 632 residues long: Acyl-coenzyme A oxidase-like protein (632 aa).

376–381 provides a ligand contact to FAD; it reads TGGMGY.

This sequence belongs to the acyl-CoA oxidase family. FAD is required as a cofactor.

The polypeptide is Acyl-coenzyme A oxidase-like protein (Acoxl) (Mus musculus (Mouse)).